We begin with the raw amino-acid sequence, 559 residues long: Transcription factor tstO (559 aa).

A DNA-binding region (zn(2)-C6 fungal-type) is located at residues Cys-23 to Cys-50. Disordered stretches follow at residues Gly-166–Ser-316 and Ala-453–Ala-477. Positions Ser-222–Ser-232 are enriched in low complexity. The span at Thr-255–Ser-267 shows a compositional bias: polar residues. Basic and acidic residues predominate over residues Ile-268–Phe-279. Low complexity-rich tracts occupy residues Ser-286–Ser-316 and Asn-462–Ala-477.

The protein resides in the nucleus. In terms of biological role, transcription factore; part of the gene cluster that mediates the biosynthesis of the antihypercholesterolemic agents phomoidrides which are dimeric anhydrides. Probably regulates the expression of the genes from the cluster. This Talaromyces stipitatus (strain ATCC 10500 / CBS 375.48 / QM 6759 / NRRL 1006) (Penicillium stipitatum) protein is Transcription factor tstO.